Reading from the N-terminus, the 555-residue chain is Transmembrane protein 87B (555 aa).

The first 42 residues, 1 to 42 (MVAACRSVAGLLPRRRRCFPARAPLLRVALCLLCWTPAAVRA), serve as a signal peptide directing secretion. At 43–214 (VPELGLWLET…PHGYISASDW (172 aa)) the chain is on the lumenal side. 2 N-linked (GlcNAc...) asparagine glycosylation sites follow: Asn68 and Asn197. A helical membrane pass occupies residues 215 to 235 (PLMIFYMVMCIVYILYGILWL). Over 236-247 (TWSACYWKDILR) the chain is Cytoplasmic. The helical transmembrane segment at 248–268 (IQFWIAAVIFLGMLEKAVFYS) threads the bilayer. The Lumenal segment spans residues 269-299 (EYQNISNTGLSTQGLLIFAELISAIKRTLAR). An N-linked (GlcNAc...) asparagine glycan is attached at Asn272. Residues 300-320 (LLVIIVSLGYGIVKPRLGTVM) form a helical membrane-spanning segment. Residues 321-322 (HR) are Cytoplasmic-facing. Residues 323-343 (VIGLGLLYLIFAAVEGVMRVI) traverse the membrane as a helical segment. Topologically, residues 344 to 350 (GGSNHLA) are lumenal. Residues 351 to 371 (VVLDDIILAVIDSIFVWFIFI) form a helical membrane-spanning segment. The Cytoplasmic portion of the chain corresponds to 372–396 (SLAQTMKTLRLRKNTVKFSLYRHFK). A helical membrane pass occupies residues 397–417 (NTLIFAVLASIVFMGWTTKTF). The Lumenal segment spans residues 418 to 429 (RIAKCQSDWMER). The helical transmembrane segment at 430-450 (WVDDAFWSFLFSLILIVIMFL) threads the bilayer. The Cytoplasmic segment spans residues 451–555 (WRPSANNQRY…EKMFSSEKIM (105 aa)). Phosphoserine occurs at positions 469, 494, 496, and 534.

It belongs to the LU7TM family. TMEM87 subfamily.

Its subcellular location is the golgi apparatus membrane. Functionally, may be involved in retrograde transport from endosomes to the trans-Golgi network (TGN). In Homo sapiens (Human), this protein is Transmembrane protein 87B.